A 344-amino-acid chain; its full sequence is Dihydroorotase (344 aa).

Histidine 13 and histidine 15 together coordinate Zn(2+). Residues 15-17 (HLR) and asparagine 41 each bind substrate. Residues lysine 99, histidine 136, and histidine 174 each coordinate Zn(2+). The residue at position 99 (lysine 99) is an N6-carboxylysine. Histidine 136 lines the substrate pocket. Leucine 219 is a substrate binding site. Position 247 (aspartate 247) interacts with Zn(2+). Residue aspartate 247 is part of the active site. Residues histidine 251 and alanine 263 each coordinate substrate.

It belongs to the metallo-dependent hydrolases superfamily. DHOase family. Class II DHOase subfamily. In terms of assembly, homodimer. The cofactor is Zn(2+).

The enzyme catalyses (S)-dihydroorotate + H2O = N-carbamoyl-L-aspartate + H(+). Its pathway is pyrimidine metabolism; UMP biosynthesis via de novo pathway; (S)-dihydroorotate from bicarbonate: step 3/3. Functionally, catalyzes the reversible cyclization of carbamoyl aspartate to dihydroorotate. The sequence is that of Dihydroorotase from Acinetobacter baumannii (strain SDF).